The following is a 129-amino-acid chain: uncharacterized protein (129 aa).

Residues 1–28 lie on the Cytoplasmic side of the membrane; sequence MAGTLFIILRFVDTTLPSSRVYCVRSLE. The chain crosses the membrane as a helical span at residues 29–49; the sequence is VSVAVELAAATVLAFESIGVV. Over 50–54 the chain is Extracellular; sequence DDCGR. Residues 55 to 75 form a helical membrane-spanning segment; it reads SVLFSIILIAAFICSVFLIAS. The Cytoplasmic segment spans residues 76–129; it reads EDIAGSRRSTGSCVTLWEGRNISFCLYRSNWLNTVPVGYMFFLRKNRSLDERYF.

The protein localises to the membrane. This is an uncharacterized protein from Saccharomyces cerevisiae (strain ATCC 204508 / S288c) (Baker's yeast).